Consider the following 237-residue polypeptide: Uridylate kinase (237 aa).

9-12 (KFSG) contacts ATP. The interval 17 to 22 (GEAGYG) is involved in allosteric activation by GTP. Residue Gly51 coordinates UMP. Gly52 and Arg56 together coordinate ATP. UMP is bound by residues Asp72 and 133–140 (TGNPFFTT). Positions 160, 166, and 169 each coordinate ATP.

The protein belongs to the UMP kinase family. In terms of assembly, homohexamer.

It localises to the cytoplasm. It catalyses the reaction UMP + ATP = UDP + ADP. It functions in the pathway pyrimidine metabolism; CTP biosynthesis via de novo pathway; UDP from UMP (UMPK route): step 1/1. Its activity is regulated as follows. Allosterically activated by GTP. Inhibited by UTP. In terms of biological role, catalyzes the reversible phosphorylation of UMP to UDP. In Sulfurimonas denitrificans (strain ATCC 33889 / DSM 1251) (Thiomicrospira denitrificans (strain ATCC 33889 / DSM 1251)), this protein is Uridylate kinase.